Reading from the N-terminus, the 341-residue chain is L-threonine 3-dehydrogenase (341 aa).

Residue Cys38 coordinates Zn(2+). Catalysis depends on charge relay system residues Thr40 and His43. Positions 63, 64, 93, 96, 99, and 107 each coordinate Zn(2+). Residues Ile175, Asp195, Arg200, Leu262 to Ile264, and Ile286 to Tyr287 contribute to the NAD(+) site.

Belongs to the zinc-containing alcohol dehydrogenase family. As to quaternary structure, homotetramer. Zn(2+) is required as a cofactor.

The protein localises to the cytoplasm. It catalyses the reaction L-threonine + NAD(+) = (2S)-2-amino-3-oxobutanoate + NADH + H(+). The protein operates within amino-acid degradation; L-threonine degradation via oxydo-reductase pathway; glycine from L-threonine: step 1/2. In terms of biological role, catalyzes the NAD(+)-dependent oxidation of L-threonine to 2-amino-3-ketobutyrate. This chain is L-threonine 3-dehydrogenase, found in Shewanella halifaxensis (strain HAW-EB4).